Consider the following 286-residue polypeptide: 4-hydroxy-tetrahydrodipicolinate synthase (286 aa).

Thr42 is a binding site for pyruvate. Tyr129 (proton donor/acceptor) is an active-site residue. The Schiff-base intermediate with substrate role is filled by Lys157. Val196 contributes to the pyruvate binding site.

Belongs to the DapA family. In terms of assembly, homotetramer; dimer of dimers.

The protein resides in the cytoplasm. It catalyses the reaction L-aspartate 4-semialdehyde + pyruvate = (2S,4S)-4-hydroxy-2,3,4,5-tetrahydrodipicolinate + H2O + H(+). The protein operates within amino-acid biosynthesis; L-lysine biosynthesis via DAP pathway; (S)-tetrahydrodipicolinate from L-aspartate: step 3/4. Functionally, catalyzes the condensation of (S)-aspartate-beta-semialdehyde [(S)-ASA] and pyruvate to 4-hydroxy-tetrahydrodipicolinate (HTPA). The sequence is that of 4-hydroxy-tetrahydrodipicolinate synthase from Chlamydia muridarum (strain MoPn / Nigg).